The following is a 363-amino-acid chain: tRNA N6-adenosine threonylcarbamoyltransferase (363 aa).

Fe cation is bound by residues histidine 121 and histidine 125. Residues leucine 143 to glycine 147, aspartate 176, glycine 189, and asparagine 287 contribute to the substrate site. Residue aspartate 315 participates in Fe cation binding.

The protein belongs to the KAE1 / TsaD family. It depends on Fe(2+) as a cofactor.

The protein resides in the cytoplasm. The enzyme catalyses L-threonylcarbamoyladenylate + adenosine(37) in tRNA = N(6)-L-threonylcarbamoyladenosine(37) in tRNA + AMP + H(+). Functionally, required for the formation of a threonylcarbamoyl group on adenosine at position 37 (t(6)A37) in tRNAs that read codons beginning with adenine. Is involved in the transfer of the threonylcarbamoyl moiety of threonylcarbamoyl-AMP (TC-AMP) to the N6 group of A37, together with TsaE and TsaB. TsaD likely plays a direct catalytic role in this reaction. The sequence is that of tRNA N6-adenosine threonylcarbamoyltransferase from Rhodopseudomonas palustris (strain BisB5).